The primary structure comprises 199 residues: Ribonuclease HII (199 aa).

One can recognise an RNase H type-2 domain in the interval 12 to 199; that stretch reads DLLAGTDEAG…FGPVKKILEG (188 aa). 3 residues coordinate a divalent metal cation: Asp-18, Glu-19, and Asp-110.

Belongs to the RNase HII family. Mn(2+) serves as cofactor. Mg(2+) is required as a cofactor.

It is found in the cytoplasm. The enzyme catalyses Endonucleolytic cleavage to 5'-phosphomonoester.. Its function is as follows. Endonuclease that specifically degrades the RNA of RNA-DNA hybrids. This chain is Ribonuclease HII, found in Marinomonas sp. (strain MWYL1).